The following is a 489-amino-acid chain: Alpha-amylase (489 aa).

The N-terminal stretch at 1–16 (HFKPILVLCLATLALG) is a signal peptide. Cysteines 44 and 102 form a disulfide. Ca(2+) is bound by residues Asn116, Arg164, and Asp173. Cys152 and Cys166 are oxidised to a cystine. Residue Arg201 participates in chloride binding. Residue Asp203 is the Nucleophile of the active site. A Ca(2+)-binding site is contributed by His207. The active-site Proton donor is the Glu240. Positions 303 and 339 each coordinate chloride. Intrachain disulfides connect Cys372-Cys378 and Cys443-Cys455.

This sequence belongs to the glycosyl hydrolase 13 family. As to quaternary structure, monomer. Ca(2+) serves as cofactor. It depends on chloride as a cofactor.

The enzyme catalyses Endohydrolysis of (1-&gt;4)-alpha-D-glucosidic linkages in polysaccharides containing three or more (1-&gt;4)-alpha-linked D-glucose units.. The polypeptide is Alpha-amylase (Tribolium castaneum (Red flour beetle)).